The chain runs to 499 residues: Glycerol kinase (499 aa).

ADP is bound at residue threonine 12. The ATP site is built by threonine 12, threonine 13, and serine 14. Position 12 (threonine 12) interacts with sn-glycerol 3-phosphate. Arginine 16 contacts ADP. Residues arginine 82, glutamate 83, and tyrosine 134 each coordinate sn-glycerol 3-phosphate. Arginine 82, glutamate 83, and tyrosine 134 together coordinate glycerol. Histidine 230 bears the Phosphohistidine; by HPr mark. Residue aspartate 244 coordinates sn-glycerol 3-phosphate. Residues aspartate 244 and glutamine 245 each coordinate glycerol. Residues threonine 266 and glycine 309 each coordinate ADP. The ATP site is built by threonine 266, glycine 309, glutamine 313, and glycine 410. Positions 410 and 414 each coordinate ADP.

The protein belongs to the FGGY kinase family. As to quaternary structure, homotetramer and homodimer (in equilibrium). The phosphoenolpyruvate-dependent sugar phosphotransferase system (PTS), including enzyme I, and histidine-containing protein (HPr) are required for the phosphorylation, which leads to the activation of the enzyme.

It catalyses the reaction glycerol + ATP = sn-glycerol 3-phosphate + ADP + H(+). Its pathway is polyol metabolism; glycerol degradation via glycerol kinase pathway; sn-glycerol 3-phosphate from glycerol: step 1/1. With respect to regulation, activated by phosphorylation and inhibited by fructose 1,6-bisphosphate (FBP). Functionally, key enzyme in the regulation of glycerol uptake and metabolism. Catalyzes the phosphorylation of glycerol to yield sn-glycerol 3-phosphate. In Staphylococcus haemolyticus (strain JCSC1435), this protein is Glycerol kinase.